Consider the following 383-residue polypeptide: Probable butyrate kinase (383 aa).

Belongs to the acetokinase family.

The protein localises to the cytoplasm. The enzyme catalyses butanoate + ATP = butanoyl phosphate + ADP. The protein is Probable butyrate kinase of Deinococcus radiodurans (strain ATCC 13939 / DSM 20539 / JCM 16871 / CCUG 27074 / LMG 4051 / NBRC 15346 / NCIMB 9279 / VKM B-1422 / R1).